The sequence spans 129 residues: UPF0102 protein Mnod_0024 (129 aa).

The protein belongs to the UPF0102 family.

The polypeptide is UPF0102 protein Mnod_0024 (Methylobacterium nodulans (strain LMG 21967 / CNCM I-2342 / ORS 2060)).